The sequence spans 156 residues: 6,7-dimethyl-8-ribityllumazine synthase (156 aa).

Residues Phe-22, 57–59, and 81–83 each bind 5-amino-6-(D-ribitylamino)uracil; these read AYE and TVI. 86–87 contributes to the (2S)-2-hydroxy-3-oxobutyl phosphate binding site; it reads GT. The active-site Proton donor is the His-89. Residue Phe-114 participates in 5-amino-6-(D-ribitylamino)uracil binding. Position 128 (Arg-128) interacts with (2S)-2-hydroxy-3-oxobutyl phosphate.

Belongs to the DMRL synthase family. Forms an icosahedral capsid composed of 60 subunits, arranged as a dodecamer of pentamers.

It carries out the reaction (2S)-2-hydroxy-3-oxobutyl phosphate + 5-amino-6-(D-ribitylamino)uracil = 6,7-dimethyl-8-(1-D-ribityl)lumazine + phosphate + 2 H2O + H(+). The protein operates within cofactor biosynthesis; riboflavin biosynthesis; riboflavin from 2-hydroxy-3-oxobutyl phosphate and 5-amino-6-(D-ribitylamino)uracil: step 1/2. Catalyzes the formation of 6,7-dimethyl-8-ribityllumazine by condensation of 5-amino-6-(D-ribitylamino)uracil with 3,4-dihydroxy-2-butanone 4-phosphate. This is the penultimate step in the biosynthesis of riboflavin. This Salmonella heidelberg (strain SL476) protein is 6,7-dimethyl-8-ribityllumazine synthase.